Here is a 478-residue protein sequence, read N- to C-terminus: Centromere DNA-binding protein complex CBF3 subunit C (478 aa).

The disordered stretch occupies residues 206–251; it reads EVGEEKDVDVSGANSDENSSPSSTIKNKKRSASKRSHSDNGNVGAT. The segment covering 217–230 has biased composition (polar residues); it reads GANSDENSSPSSTI. Basic residues predominate over residues 231 to 240; the sequence is KNKKRSASKR.

In terms of assembly, component of the CBF3 copmplex, which is formed of CBF3A/CBF2, CBF3B/CEP3, CBF3C/CTF13 and CBF3D. CBF3C interacts with CBF3D and SGT1.

The protein resides in the nucleus. The protein localises to the chromosome. It is found in the centromere. Acts as a central component of the centromere DNA-binding protein complex CBF3, which is essential for chromosome segregation and movement of centromeres along microtubules. CBF3 is required for the recruitment of other kinetochore complexes to CEN DNA. It plays a role in the attachment of chromosomes to the spindle and binds selectively to a highly conserved DNA sequence called CDEIII, found in centromers and in several promoters. The association of CBF3C with CBF3D and SGT1 is required for CBF3C activation and CBF3 assembly. In Saccharomyces cerevisiae (strain ATCC 204508 / S288c) (Baker's yeast), this protein is Centromere DNA-binding protein complex CBF3 subunit C (CTF13).